The primary structure comprises 85 residues: Small ribosomal subunit protein uS17 (85 aa).

Belongs to the universal ribosomal protein uS17 family. In terms of assembly, part of the 30S ribosomal subunit.

One of the primary rRNA binding proteins, it binds specifically to the 5'-end of 16S ribosomal RNA. The sequence is that of Small ribosomal subunit protein uS17 from Pseudoalteromonas translucida (strain TAC 125).